Reading from the N-terminus, the 260-residue chain is Cytochrome c1-2, heme protein, mitochondrial (260 aa).

The N-terminal 17 residues, 1–17 (IGAGVSGLLGFATVASA), are a transit peptide targeting the mitochondrion. Over 18 to 221 (DEAEHGLECP…AAEPEMEERK (204 aa)) the chain is Mitochondrial intermembrane. One can recognise a Cytochrome c domain in the interval 43–150 (ASIRRGHQVY…NGQNYVFALL (108 aa)). Residues cysteine 56, cysteine 59, histidine 60, and methionine 179 each contribute to the heme c site. The helical transmembrane segment at 222-241 (LMGFKWIFVLSLALLQAAYY) threads the bilayer. At 242 to 260 (RRLRWSVLKSRKLVLDVVN) the chain is on the mitochondrial matrix side.

The protein belongs to the cytochrome c family. Component of the ubiquinol-cytochrome c oxidoreductase (cytochrome b-c1 complex, complex III, CIII), a multisubunit enzyme composed of 3 respiratory subunits cytochrome b, cytochrome c1 and Rieske protein, 2 core protein subunits, and additional low-molecular weight protein subunits. The complex exists as an obligatory dimer and forms supercomplexes (SCs) in the inner mitochondrial membrane with cytochrome c oxidase (complex IV, CIV). Heme c serves as cofactor. In terms of tissue distribution, in all tissues analyzed.

Its subcellular location is the mitochondrion inner membrane. The enzyme catalyses a quinol + 2 Fe(III)-[cytochrome c](out) = a quinone + 2 Fe(II)-[cytochrome c](out) + 2 H(+)(out). In terms of biological role, component of the ubiquinol-cytochrome c oxidoreductase, a multisubunit transmembrane complex that is part of the mitochondrial electron transport chain which drives oxidative phosphorylation. The respiratory chain contains 3 multisubunit complexes succinate dehydrogenase (complex II, CII), ubiquinol-cytochrome c oxidoreductase (cytochrome b-c1 complex, complex III, CIII) and cytochrome c oxidase (complex IV, CIV), that cooperate to transfer electrons derived from NADH and succinate to molecular oxygen, creating an electrochemical gradient over the inner membrane that drives transmembrane transport and the ATP synthase. The cytochrome b-c1 complex catalyzes electron transfer from ubiquinol to cytochrome c, linking this redox reaction to translocation of protons across the mitochondrial inner membrane, with protons being carried across the membrane as hydrogens on the quinol. In the process called Q cycle, 2 protons are consumed from the matrix, 4 protons are released into the intermembrane space and 2 electrons are passed to cytochrome c. Cytochrome c1 is a catalytic core subunit containing a c-type heme. It transfers electrons from the [2Fe-2S] iron-sulfur cluster of the Rieske protein to cytochrome c. This chain is Cytochrome c1-2, heme protein, mitochondrial (CYCL), found in Solanum tuberosum (Potato).